Consider the following 393-residue polypeptide: S-adenosylmethionine synthase 2 (393 aa).

Position 9 (Glu-9) interacts with Mg(2+). Residue His-15 coordinates ATP. Position 43 (Glu-43) interacts with K(+). L-methionine-binding residues include Glu-56 and Gln-99. ATP contacts are provided by residues 167–169, 235–238, Asp-246, 252–253, Ala-269, Lys-273, and Lys-277; these read DGK, SGRF, and RM. Position 246 (Asp-246) interacts with L-methionine. Residue Lys-277 coordinates L-methionine.

The protein belongs to the AdoMet synthase family. In terms of assembly, homotetramer. The cofactor is Mn(2+). Requires Mg(2+) as cofactor. Co(2+) is required as a cofactor. It depends on K(+) as a cofactor.

It is found in the cytoplasm. It carries out the reaction L-methionine + ATP + H2O = S-adenosyl-L-methionine + phosphate + diphosphate. It functions in the pathway amino-acid biosynthesis; S-adenosyl-L-methionine biosynthesis; S-adenosyl-L-methionine from L-methionine: step 1/1. In terms of biological role, catalyzes the formation of S-adenosylmethionine from methionine and ATP. The reaction comprises two steps that are both catalyzed by the same enzyme: formation of S-adenosylmethionine (AdoMet) and triphosphate, and subsequent hydrolysis of the triphosphate. The protein is S-adenosylmethionine synthase 2 (SAMS2) of Daucus carota (Wild carrot).